We begin with the raw amino-acid sequence, 1240 residues long: MGTIGVPLTAHCVVLFLLQMVALSTEQFTVNGLESPVLVPLGGNLELSCQLSPPQQAKHMEIRWFKNRYSEPVYLYRNGKDLNEAIVYKYVERTELLKDDIGKGKVTLRIFKVTSVDSGSYHCFFKDDKFYEEHIIEVKVTATSSDIQILMHPPNSTGVRLECHSGGWFPQPHMEWRDSKGEYIPATSKSHSQDENEFFNMTMDLFIKSNSYWSAACYIQNFVTHQEESISFVLPGTKVLLLKNIQSIFQSSSVDLEKKDMLLKSIKSRFQSSSVDPEKKERLLKIIQSRIESSSVDQETKALLLESIQSSIENSTVDLETKVWLLESIKSSIQNSSVDPETKELLLERIKSSIENSTVDLGTKEWLLESIQSSIQSSSVDLGTKKMLLKIIQSSIQSFSVYIGTKEWLLERVQSSIQSSSVDLGTKELLLEIIQSSIEGYSVELGIEELLSKIILSSIQSSRVDLGIKELLVKICQSSIQSTSVILETKEWLVKIFQSNIQSSSMDLETKVWLVKFFQSSIQSSSMDLGTIKWLVKNVQSNIQSSRVDLETKRMLLEIIQSSIQNSSVHRGTKKMLLKVIQSSIQSFSVDLETKEWLLKIIQSSIQSSSVDIGTKSMLLKKIGLILRSSIVNPGTELLFQIIQSDLQSSSVNTETREMLFEITQPTVQSSSVNSVTEELLEENYQLLLQSSSVNLEAENILNDTTQRILQLSSVNQGREKLLLDRIQQILQSSSVNPETKCWLLKRIQFILENPSVHQEKKDLLLERIHLILQSSSVQKETKSLLLGSIQSILHSFSVQKETKYLLLEKIQLILQNSSVHQETKDLLLKIIQLILQYSSVHEATSKLLLERIQLILQSSSVQKETKDLLLNRIFSILQNSCVDQGVKYFLLNIIHPILQKTSVHQETKSMLLDRIELILQSSSMQQETKNHLLDQIEQILQDTTVHQETKDLLLNRIELILQNSSVQQETKELLMDKIDSILRYTWVHQETKDLLLNRIELILQSSSVQEETKNFLCNIIASILQSTSMHQEKKKLLLGRIELILQSSSVQQETKKLLLKIVQSSSPSSSVRLESCNKRNPFWKKHALDLGISVFAIIVVTLIRHLNQREADQHFELDTLWSKDTSVILCVLIMFNNRLKALIYFRLYGYSPPGKTYKYIVNYILRFSQPLFFIVYSAIILVMHLQIQNTDSLFSLYNSWMVEMIMVLGLLLAIFNVKNIATALLHLGRTTLRLFRIKD.

An N-terminal signal peptide occupies residues 1-24; sequence MGTIGVPLTAHCVVLFLLQMVALS. The Extracellular segment spans residues 25 to 1086; it reads TEQFTVNGLE…CNKRNPFWKK (1062 aa). The Ig-like V-type domain maps to 26 to 141; the sequence is EQFTVNGLES…EEHIIEVKVT (116 aa). Residues cysteine 49 and cysteine 123 are joined by a disulfide bond. An Ig-like C1-type domain is found at 142-231; it reads ATSSDIQILM…FVTHQEESIS (90 aa). N-linked (GlcNAc...) asparagine glycans are attached at residues asparagine 155, asparagine 200, and asparagine 314. Residues cysteine 163 and cysteine 217 are joined by a disulfide bond. The chain crosses the membrane as a helical span at residues 1087-1107; sequence HALDLGISVFAIIVVTLIRHL. At 1108-1125 the chain is on the cytoplasmic side; it reads NQREADQHFELDTLWSKD. The chain crosses the membrane as a helical span at residues 1126–1146; sequence TSVILCVLIMFNNRLKALIYF. Topologically, residues 1147–1167 are extracellular; that stretch reads RLYGYSPPGKTYKYIVNYILR. A helical transmembrane segment spans residues 1168 to 1188; it reads FSQPLFFIVYSAIILVMHLQI. Residues 1189 to 1205 are Cytoplasmic-facing; that stretch reads QNTDSLFSLYNSWMVEM. The helical transmembrane segment at 1206 to 1226 threads the bilayer; sequence IMVLGLLLAIFNVKNIATALL. Topologically, residues 1227 to 1240 are extracellular; that stretch reads HLGRTTLRLFRIKD.

Belongs to the SKINT family. Expressed in skin.

It localises to the membrane. May act by engaging a cell surface molecule on immature T-cells in the embryonic thymus. The polypeptide is Selection and upkeep of intraepithelial T-cells protein 6 (Skint6) (Mus musculus (Mouse)).